Here is a 526-residue protein sequence, read N- to C-terminus: GMP synthase [glutamine-hydrolyzing] (526 aa).

The Glutamine amidotransferase type-1 domain maps to arginine 10–leucine 208. The Nucleophile role is filled by cysteine 87. Residues histidine 182 and glutamate 184 contribute to the active site. The GMPS ATP-PPase domain occupies tryptophan 209–arginine 401. Serine 236–serine 242 serves as a coordination point for ATP.

Homodimer.

The enzyme catalyses XMP + L-glutamine + ATP + H2O = GMP + L-glutamate + AMP + diphosphate + 2 H(+). It functions in the pathway purine metabolism; GMP biosynthesis; GMP from XMP (L-Gln route): step 1/1. Functionally, catalyzes the synthesis of GMP from XMP. The protein is GMP synthase [glutamine-hydrolyzing] of Hydrogenovibrio crunogenus (strain DSM 25203 / XCL-2) (Thiomicrospira crunogena).